An 874-amino-acid chain; its full sequence is Speckle targeted PIP5K1A-regulated poly(A) polymerase (874 aa).

Residues 16–46 (FRCCLCHVTTANRPSLDAHLGGRKHRHLVEL) form a Matrin-type zinc finger. The RRM domain occupies 56–128 (RSVFVSGFPR…HRLRVRPREQ (73 aa)). The tract at residues 113–146 (QHSLGGHRLRVRPREQKEFQSPASKSPKGAAPDS) is disordered. ATP is bound at residue Ser205. Mg(2+)-binding residues include Asp216 and Asp218. Asp216 and Asp218 together coordinate UTP. The segment at 252–334 (QALACTPASP…ELAETPKEEK (83 aa)) is disordered. The span at 259–269 (ASPPDSQPPAS) shows a compositional bias: pro residues. Positions 280 to 291 (TPSSSLAPQTPD) are enriched in polar residues. Asn392 contacts ATP. UTP is bound by residues Asn392, Arg414, Tyr432, and His549. Positions 491–549 (LSSLLAQFFSCVSCWDLRGSLLSLREGQALPVAGGLPSNLWEGLRLGPLNLQDPFDLSH) constitute a PAP-associated domain. The tract at residues 598–874 (SSPSSLLSAT…FLPQAIRHLK (277 aa)) is KA1; binds the bulging loops of U6 snRNA but is dispensable for terminal uridylyltransferase activity. Disordered stretches follow at residues 638–662 (ATKR…KRLK) and 705–761 (MQSP…ASLP). A Phosphoserine modification is found at Ser750.

The protein belongs to the DNA polymerase type-B-like family. As to quaternary structure, associates with the cleavage and polyadenylation specificity factor (CPSF) complex. Interacts with CPSF1 and CPSF3; the interaction is direct. Interacts with PIP5K1A. Mg(2+) is required as a cofactor. Mn(2+) serves as cofactor. Phosphorylated by CK1 in the proline-rich (Pro-rich) region. In terms of tissue distribution, widely expressed.

Its subcellular location is the nucleus. It localises to the nucleolus. It is found in the nucleus speckle. The enzyme catalyses RNA(n) + UTP = RNA(n)-3'-uridine ribonucleotide + diphosphate. The catalysed reaction is RNA(n) + ATP = RNA(n)-3'-adenine ribonucleotide + diphosphate. With respect to regulation, adenylyltransferase activity is specifically phosphatidylinositol 4,5-bisphosphate (PtdIns(4,5)P2). Its function is as follows. Poly(A) polymerase that creates the 3'-poly(A) tail of specific pre-mRNAs. Localizes to nuclear speckles together with PIP5K1A and mediates polyadenylation of a select set of mRNAs, such as HMOX1. In addition to polyadenylation, it is also required for the 3'-end cleavage of pre-mRNAs: binds to the 3'UTR of targeted pre-mRNAs and promotes the recruitment and assembly of the CPSF complex on the 3'UTR of pre-mRNAs. In addition to adenylyltransferase activity, also has uridylyltransferase activity. However, the ATP ratio is higher than UTP in cells, suggesting that it functions primarily as a poly(A) polymerase. Acts as a specific terminal uridylyltransferase for U6 snRNA in vitro: responsible for a controlled elongation reaction that results in the restoration of the four 3'-terminal UMP-residues found in newly transcribed U6 snRNA. Not involved in replication-dependent histone mRNA degradation. The polypeptide is Speckle targeted PIP5K1A-regulated poly(A) polymerase (TUT1) (Homo sapiens (Human)).